Here is a 179-residue protein sequence, read N- to C-terminus: Transcription factor 21 (179 aa).

Residues 20-87 form a disordered region; that stretch reads CDGLKMDSNK…QVQRNAANAR (68 aa). The span at 33-46 shows a compositional bias: low complexity; the sequence is TSNESTEESSNCEN. Residues 70-80 are compositionally biased toward polar residues; sequence SGVSQEGKQVQ. Residues 79–131 form the bHLH domain; the sequence is VQRNAANARERARMRVLSKAFSRLKTTLPWVPPDTKLSKLDTLRLASSYIAHL.

In terms of assembly, efficient DNA binding requires dimerization with another bHLH protein. Forms a heterodimer with TCF3 and binds the E box (5'-CANNTG-3').

It is found in the nucleus. In terms of biological role, involved in epithelial-mesenchymal interactions in kidney and lung morphogenesis that include epithelial differentiation and branching morphogenesis. May play a role in the specification or differentiation of one or more subsets of epicardial cell types. The sequence is that of Transcription factor 21 (TCF21) from Homo sapiens (Human).